Consider the following 636-residue polypeptide: Putative lipase ATG15 (636 aa).

Residues M1–R19 are Cytoplasmic-facing. The helical; Signal-anchor for type II membrane protein transmembrane segment at L20–F42 threads the bilayer. Topologically, residues S43 to M636 are lumenal. N-linked (GlcNAc...) asparagine glycosylation is found at N211, N233, N291, N315, and N477. The segment at G478–S500 is disordered. The span at T479 to S500 shows a compositional bias: low complexity.

The protein belongs to the AB hydrolase superfamily. Lipase family. As to quaternary structure, binds to both phosphatidylinositol (PI) and phosphatidylinositol 3,5-bisphosphate (PIP2).

The protein resides in the endosome. It is found in the multivesicular body membrane. Its subcellular location is the prevacuolar compartment membrane. The enzyme catalyses a triacylglycerol + H2O = a diacylglycerol + a fatty acid + H(+). Lipase which is essential for lysis of subvacuolar cytoplasm to vacuole targeted bodies and intravacuolar autophagic bodies. Involved in the lysis of intravacuolar multivesicular body (MVB) vesicles. The intravacuolar membrane disintegration by ATG15 is critical to life span extension. Autophagy is required for proper vegetative growth, asexual/sexual reproduction, and full virulence. Autophagy is particularly involved in the biosynthesis of deoxynivalenol (DON), an important virulence determinant. The polypeptide is Putative lipase ATG15 (Gibberella zeae (strain ATCC MYA-4620 / CBS 123657 / FGSC 9075 / NRRL 31084 / PH-1) (Wheat head blight fungus)).